A 428-amino-acid chain; its full sequence is 3-phosphoshikimate 1-carboxyvinyltransferase (428 aa).

Residues Lys22, Ser23, and Arg27 each contribute to the 3-phosphoshikimate site. A phosphoenolpyruvate-binding site is contributed by Lys22. Phosphoenolpyruvate is bound by residues Gly96 and Arg124. 3-phosphoshikimate is bound by residues Ser170, Ser171, Gln172, Ser198, Asp314, Asn337, and Lys341. Gln172 provides a ligand contact to phosphoenolpyruvate. The Proton acceptor role is filled by Asp314. Arg345, Arg387, and Lys412 together coordinate phosphoenolpyruvate.

The protein belongs to the EPSP synthase family. As to quaternary structure, monomer.

The protein localises to the cytoplasm. It catalyses the reaction 3-phosphoshikimate + phosphoenolpyruvate = 5-O-(1-carboxyvinyl)-3-phosphoshikimate + phosphate. The protein operates within metabolic intermediate biosynthesis; chorismate biosynthesis; chorismate from D-erythrose 4-phosphate and phosphoenolpyruvate: step 6/7. Functionally, catalyzes the transfer of the enolpyruvyl moiety of phosphoenolpyruvate (PEP) to the 5-hydroxyl of shikimate-3-phosphate (S3P) to produce enolpyruvyl shikimate-3-phosphate and inorganic phosphate. This chain is 3-phosphoshikimate 1-carboxyvinyltransferase, found in Shewanella denitrificans (strain OS217 / ATCC BAA-1090 / DSM 15013).